Here is a 492-residue protein sequence, read N- to C-terminus: Gamma-aminobutyric acid receptor subunit alpha-3 (492 aa).

The signal sequence occupies residues 1–28 (MIITQMSQFYMAGLGLLFLINILPGTTG). At 29-274 (QVESRRQEPG…MTTHFHLKRK (246 aa)) the chain is on the extracellular side. N63 carries an N-linked (GlcNAc...) asparagine glycan. R119 serves as a coordination point for 4-aminobutanoate. N-linked (GlcNAc...) asparagine glycosylation is found at N163 and N176. T182 lines the 4-aminobutanoate pocket. Residues C191 and C205 are joined by a disulfide bond. An N-linked (GlcNAc...) asparagine glycan is attached at N228. A helical transmembrane segment spans residues 275–295 (IGYFVIQTYLPCIMTVILSQV). The Cytoplasmic segment spans residues 296 to 305 (SFWLNRESVP). A helical membrane pass occupies residues 306–325 (ARTVFGVTTVLTMTTLSISA). Over 326–336 (RNSLPKVAYAT) the chain is Extracellular. The chain crosses the membrane as a helical span at residues 337-357 (AMDWFMAVCYAFVFSALIEFA). The Cytoplasmic segment spans residues 358-457 (TVNYFTKRSW…TYNSVSKVDK (100 aa)). Phosphoserine is present on S426. Position 427 is a phosphothreonine (T427). S433 is subject to Phosphoserine. Residues 458-478 (ISRIIFPVLFAIFNLVYWATY) form a helical membrane-spanning segment. Residues 479-492 (VNRESAIKGMIRKQ) are Extracellular-facing.

Belongs to the ligand-gated ion channel (TC 1.A.9) family. Gamma-aminobutyric acid receptor (TC 1.A.9.5) subfamily. GABRA3 sub-subfamily. As to quaternary structure, heteropentamer, formed by a combination of alpha (GABRA1-6), beta (GABRB1-3), gamma (GABRG1-3), delta (GABRD), epsilon (GABRE), rho (GABRR1-3), pi (GABRP) and theta (GABRQ) chains, each subunit exhibiting distinct physiological and pharmacological properties. Binds UBQLN1. Interacts with GPHN.

Its subcellular location is the postsynaptic cell membrane. It localises to the cell membrane. It carries out the reaction chloride(in) = chloride(out). Its function is as follows. Alpha subunit of the heteropentameric ligand-gated chloride channel gated by gamma-aminobutyric acid (GABA), a major inhibitory neurotransmitter in the brain. GABA-gated chloride channels, also named GABA(A) receptors (GABAAR), consist of five subunits arranged around a central pore and contain GABA active binding site(s) located at the alpha and beta subunit interface(s). When activated by GABA, GABAARs selectively allow the flow of chloride anions across the cell membrane down their electrochemical gradient. Chloride influx into the postsynaptic neuron following GABAAR opening decreases the neuron ability to generate a new action potential, thereby reducing nerve transmission. This chain is Gamma-aminobutyric acid receptor subunit alpha-3 (GABRA3), found in Bos taurus (Bovine).